A 274-amino-acid chain; its full sequence is 2,3,4,5-tetrahydropyridine-2,6-dicarboxylate N-succinyltransferase (274 aa).

2 residues coordinate substrate: Arg-106 and Asp-143.

The protein belongs to the transferase hexapeptide repeat family. As to quaternary structure, homotrimer.

The protein resides in the cytoplasm. It carries out the reaction (S)-2,3,4,5-tetrahydrodipicolinate + succinyl-CoA + H2O = (S)-2-succinylamino-6-oxoheptanedioate + CoA. Its pathway is amino-acid biosynthesis; L-lysine biosynthesis via DAP pathway; LL-2,6-diaminopimelate from (S)-tetrahydrodipicolinate (succinylase route): step 1/3. This chain is 2,3,4,5-tetrahydropyridine-2,6-dicarboxylate N-succinyltransferase, found in Acidovorax sp. (strain JS42).